A 1406-amino-acid chain; its full sequence is Protein crumbs homolog 1 (1406 aa).

An N-terminal signal peptide occupies residues 1-25; it reads MALKNINYLLIFYLSFSLLIYIKNS. The Extracellular segment spans residues 26-1347; that stretch reads FCNKNNTRCL…DDLISDIFTT (1322 aa). N-linked (GlcNAc...) asparagine glycosylation is found at Asn-30, Asn-41, and Asn-42. EGF-like domains are found at residues 30–68, 70–108, and 110–146; these read NNTR…KDCD, MKDP…TICE, and TIGS…RFCE. 20 cysteine pairs are disulfide-bonded: Cys-34/Cys-45, Cys-39/Cys-54, Cys-56/Cys-67, Cys-74/Cys-85, Cys-79/Cys-96, Cys-98/Cys-107, Cys-114/Cys-125, Cys-119/Cys-134, Cys-136/Cys-145, Cys-152/Cys-163, Cys-157/Cys-172, Cys-174/Cys-183, Cys-190/Cys-201, Cys-195/Cys-210, Cys-212/Cys-221, Cys-228/Cys-239, Cys-233/Cys-248, Cys-250/Cys-259, Cys-266/Cys-277, and Cys-271/Cys-286. An EGF-like 4; calcium-binding domain is found at 148–184; it reads DHDECASSPCQNGAVCQDGIDGYSCFCVPGYQGRHCD. Residues 186–222 enclose the EGF-like 5; calcium-binding domain; the sequence is EVDECASDPCKNEATCLNEIGRYTCICPHNYSGVNCE. Asn-215 carries an N-linked (GlcNAc...) asparagine glycan. The EGF-like 6; calcium-binding domain maps to 224 to 260; it reads EIDECWSQPCLNGATCQDALGAYFCDCAPGFLGDHCE. Residues 262–299 form the EGF-like 7; calcium-binding domain; the sequence is NTDECASQPCLHGGLCVDGENRYSCNCTGSGFTGTHCE. Asn-287 is a glycosylation site (N-linked (GlcNAc...) asparagine). 13 disulfide bridges follow: Cys-288–Cys-298, Cys-305–Cys-316, Cys-310–Cys-325, Cys-327–Cys-336, Cys-343–Cys-354, Cys-348–Cys-383, Cys-385–Cys-394, Cys-401–Cys-412, Cys-406–Cys-421, Cys-423–Cys-438, Cys-445–Cys-456, Cys-450–Cys-469, and Cys-471–Cys-480. 2 consecutive EGF-like domains span residues 301 to 337 and 339 to 395; these read LMPL…AQCE and DLNE…IHCE. Residues Asn-313 and Asn-322 are each glycosylated (N-linked (GlcNAc...) asparagine). The 43-residue stretch at 397–439 folds into the EGF-like 10; calcium-binding domain; it reads DVNECSSNPCQNGGTCENLPGNYTCHCPFDNLSRTFYGGRDCS. N-linked (GlcNAc...) asparagine glycosylation is found at Asn-418, Asn-427, and Asn-453. Residues 441-481 enclose the EGF-like 11 domain; it reads ILLGCTHQQCLNNGTCIPHFQDGQHGFSCLCPSGYTGSLCE. The region spanning 485–670 is the Laminin G-like 1 domain; that stretch reads TLSFEGDGFL…GSSLNVKAGC (186 aa). Asn-550, Asn-561, and Asn-657 each carry an N-linked (GlcNAc...) asparagine glycan. 4 disulfides stabilise this stretch: Cys-642–Cys-670, Cys-676–Cys-687, Cys-681–Cys-696, and Cys-698–Cys-707. The EGF-like 12 domain maps to 672-708; sequence RKDWCESQPCQSRGRCINLWLSYQCDCHRPYEGPNCL. The 172-residue stretch at 714–885 folds into the Laminin G-like 2 domain; it reads GRFGQDDSTG…PVLVNVTQGC (172 aa). N-linked (GlcNAc...) asparagine glycosylation is found at Asn-757, Asn-871, and Asn-880. 6 disulfides stabilise this stretch: Cys-851–Cys-885, Cys-891–Cys-902, Cys-896–Cys-911, Cys-913–Cys-922, Cys-928–Cys-939, and Cys-933–Cys-948. EGF-like domains are found at residues 887–923 and 924–960; these read GDNS…KACE and EVQW…QSGQ. Residues 950 to 1137 enclose the Laminin G-like 3 domain; sequence ANAVFNGQSG…ISTNSVVTGC (188 aa). Residues Asn-968, Asn-975, and Asn-1000 are each glycosylated (N-linked (GlcNAc...) asparagine). 16 disulfide bridges follow: Cys-1096/Cys-1137, Cys-1143/Cys-1154, Cys-1148/Cys-1163, Cys-1165/Cys-1174, Cys-1181/Cys-1191, Cys-1186/Cys-1200, Cys-1202/Cys-1211, Cys-1218/Cys-1229, Cys-1223/Cys-1238, Cys-1240/Cys-1249, Cys-1259/Cys-1274, Cys-1268/Cys-1283, Cys-1285/Cys-1294, Cys-1301/Cys-1312, Cys-1306/Cys-1321, and Cys-1323/Cys-1332. The region spanning 1139–1175 is the EGF-like 15 domain; it reads QLNVCNSNPCLHGGNCEDIYSSYHCSCPLGWSGKHCE. The EGF-like 16; calcium-binding domain maps to 1177–1212; that stretch reads NIDECFSNPCIHGNCSDRVAAYHCTCEPGYTGVNCE. A glycan (N-linked (GlcNAc...) asparagine) is linked at Asn-1190. EGF-like domains follow at residues 1214–1250 and 1255–1295; these read DIDN…KFCR and PSTV…EWCE. Residues Asn-1243, Asn-1265, and Asn-1273 are each glycosylated (N-linked (GlcNAc...) asparagine). The EGF-like 19; calcium-binding domain occupies 1297 to 1333; that stretch reads DIDECASDPCVNGGLCQDLLNKFQCLCDVAFAGERCE. Residues 1348-1368 traverse the membrane as a helical segment; it reads IGSVTVALLLILLLAIVASVV. Residues 1369–1406 are Cytoplasmic-facing; the sequence is TSNKRATQGTYSPSRQEKEGSRVEMWNLMPPPAMERLI. The interval 1370 to 1406 is interaction with EPB41L5; that stretch reads SNKRATQGTYSPSRQEKEGSRVEMWNLMPPPAMERLI.

This sequence belongs to the Crumbs protein family. As to quaternary structure, component of a complex composed of PALS1, CRB1 and EPB41L5. Within the complex, interacts (via intracellular domain) with PALS1 and EPB41L5 (via FERM domain). Forms a complex with MPP4 and PALS1. Interacts with MPDZ/MUPP1 and MPP4. Extensively glycosylated. Preferential expression in retina, also expressed in brain, testis, fetal brain and fetal eye. Expressed at the outer limiting membrane and apical to adherens junctions in the retina.

It localises to the apical cell membrane. The protein resides in the secreted. Its subcellular location is the cell projection. The protein localises to the cilium. It is found in the photoreceptor outer segment. It localises to the photoreceptor inner segment. In terms of biological role, plays a role in photoreceptor morphogenesis in the retina. May maintain cell polarization and adhesion. The sequence is that of Protein crumbs homolog 1 from Homo sapiens (Human).